Reading from the N-terminus, the 395-residue chain is S-adenosylmethionine synthase (395 aa).

His-16 serves as a coordination point for ATP. Residue Asp-18 coordinates Mg(2+). Glu-44 contacts K(+). Glu-57 and Gln-100 together coordinate L-methionine. Positions 100–110 (QSPDIAGGVNL) are flexible loop. Residues 175–177 (DGK), 242–243 (RF), Asp-251, 257–258 (RK), Ala-274, and Lys-278 each bind ATP. L-methionine is bound at residue Asp-251. Lys-282 contacts L-methionine.

The protein belongs to the AdoMet synthase family. In terms of assembly, homotetramer; dimer of dimers. It depends on Mg(2+) as a cofactor. K(+) serves as cofactor.

Its subcellular location is the cytoplasm. The enzyme catalyses L-methionine + ATP + H2O = S-adenosyl-L-methionine + phosphate + diphosphate. It functions in the pathway amino-acid biosynthesis; S-adenosyl-L-methionine biosynthesis; S-adenosyl-L-methionine from L-methionine: step 1/1. In terms of biological role, catalyzes the formation of S-adenosylmethionine (AdoMet) from methionine and ATP. The overall synthetic reaction is composed of two sequential steps, AdoMet formation and the subsequent tripolyphosphate hydrolysis which occurs prior to release of AdoMet from the enzyme. This is S-adenosylmethionine synthase from Thermus thermophilus (strain ATCC BAA-163 / DSM 7039 / HB27).